The following is a 287-amino-acid chain: Ribonuclease Z (287 aa).

Zn(2+) is bound by residues H64, H66, D68, H69, H124, D191, and H250. Residue D68 is the Proton acceptor of the active site.

The protein belongs to the RNase Z family. Homodimer. Requires Zn(2+) as cofactor.

The catalysed reaction is Endonucleolytic cleavage of RNA, removing extra 3' nucleotides from tRNA precursor, generating 3' termini of tRNAs. A 3'-hydroxy group is left at the tRNA terminus and a 5'-phosphoryl group is left at the trailer molecule.. Functionally, zinc phosphodiesterase, which displays some tRNA 3'-processing endonuclease activity. Probably involved in tRNA maturation, by removing a 3'-trailer from precursor tRNA. The polypeptide is Ribonuclease Z (Pyrobaculum aerophilum (strain ATCC 51768 / DSM 7523 / JCM 9630 / CIP 104966 / NBRC 100827 / IM2)).